The sequence spans 372 residues: Lipoyl synthase (372 aa).

The [4Fe-4S] cluster site is built by C37, C42, C48, C63, C67, C70, and S292. In terms of domain architecture, Radical SAM core spans W49–L281. A disordered region spans residues L338–R372. Residues A354–R372 are compositionally biased toward low complexity.

This sequence belongs to the radical SAM superfamily. Lipoyl synthase family. Requires [4Fe-4S] cluster as cofactor.

It is found in the cytoplasm. It catalyses the reaction [[Fe-S] cluster scaffold protein carrying a second [4Fe-4S](2+) cluster] + N(6)-octanoyl-L-lysyl-[protein] + 2 oxidized [2Fe-2S]-[ferredoxin] + 2 S-adenosyl-L-methionine + 4 H(+) = [[Fe-S] cluster scaffold protein] + N(6)-[(R)-dihydrolipoyl]-L-lysyl-[protein] + 4 Fe(3+) + 2 hydrogen sulfide + 2 5'-deoxyadenosine + 2 L-methionine + 2 reduced [2Fe-2S]-[ferredoxin]. The protein operates within protein modification; protein lipoylation via endogenous pathway; protein N(6)-(lipoyl)lysine from octanoyl-[acyl-carrier-protein]: step 2/2. In terms of biological role, catalyzes the radical-mediated insertion of two sulfur atoms into the C-6 and C-8 positions of the octanoyl moiety bound to the lipoyl domains of lipoate-dependent enzymes, thereby converting the octanoylated domains into lipoylated derivatives. The protein is Lipoyl synthase of Sorangium cellulosum (strain So ce56) (Polyangium cellulosum (strain So ce56)).